A 240-amino-acid polypeptide reads, in one-letter code: Ubiquinone biosynthesis O-methyltransferase (240 aa).

S-adenosyl-L-methionine contacts are provided by R44, G64, D85, and M129.

Belongs to the methyltransferase superfamily. UbiG/COQ3 family.

It carries out the reaction a 3-demethylubiquinol + S-adenosyl-L-methionine = a ubiquinol + S-adenosyl-L-homocysteine + H(+). The enzyme catalyses a 3-(all-trans-polyprenyl)benzene-1,2-diol + S-adenosyl-L-methionine = a 2-methoxy-6-(all-trans-polyprenyl)phenol + S-adenosyl-L-homocysteine + H(+). It participates in cofactor biosynthesis; ubiquinone biosynthesis. Functionally, O-methyltransferase that catalyzes the 2 O-methylation steps in the ubiquinone biosynthetic pathway. The sequence is that of Ubiquinone biosynthesis O-methyltransferase from Escherichia coli O7:K1 (strain IAI39 / ExPEC).